The primary structure comprises 179 residues: Bifunctional protein PyrR (179 aa).

Positions 100–112 match the PRPP-binding motif; the sequence is VILVDDVLFTGRT.

The protein belongs to the purine/pyrimidine phosphoribosyltransferase family. PyrR subfamily.

The enzyme catalyses UMP + diphosphate = 5-phospho-alpha-D-ribose 1-diphosphate + uracil. Functionally, regulates the transcription of the pyrimidine nucleotide (pyr) operon in response to exogenous pyrimidines. Also displays a weak uracil phosphoribosyltransferase activity which is not physiologically significant. The chain is Bifunctional protein PyrR from Actinobacillus succinogenes (strain ATCC 55618 / DSM 22257 / CCUG 43843 / 130Z).